A 311-amino-acid chain; its full sequence is MKRIADEELVREERAEESTQKWLQDAKFQEILGADSSHKSLFVLLSHPDGSQGILLANKSPFSEEKSDIEKLLATAQLQEISRNDIFGSYNIEIDPKLNLLKSQLIYPINDRLIAKYRQEEKFVIRETPELYETVTRPYIEKYQLNLNWVYNCLEKRSEVDKIVFEDPDNENGFVLLQDIKWDGKTLENLYVLAICHRHGLKSVRDLTGDDLEMLYNMRDKSLEAINQKYGLKTDQIKCYFHYQPSFYHLHVHFINLKYDAPASTTMSAILLDDVINNLELNPEHYKKSTLTFTRKNGDKLMEMFREALKN.

Residues Glu159, Lys181, and 242–253 (HYQPSFYHLHVH) contribute to the substrate site. Residues 249 to 253 (HLHVH) carry the Histidine triad motif motif. The Nucleophile role is filled by His251.

Belongs to the HIT family. As to expression, expressed in neurons in the ventral cord, the nerve ring and the pharynx.

Its subcellular location is the nucleus. The enzyme catalyses a 5'-end (N(7)-methyl 5'-triphosphoguanosine)-ribonucleoside in mRNA + H2O = N(7)-methyl-GMP + a 5'-end diphospho-ribonucleoside in mRNA + 2 H(+). It carries out the reaction a 5'-end (N(2),N(2),N(7)-trimethyl 5'-triphosphoguanosine)-ribonucleoside in mRNA + H2O = (N(2),N(2),N(7))-trimethyl-GMP + a 5'-end diphospho-ribonucleoside in mRNA + 2 H(+). With respect to regulation, the hydrolytic product 7-methylguanosine diphosphate (m7GDP) efficiently inhibits the decapping scavenger activity and acts as a competitive inhibitor in vitro. Its function is as follows. Decapping scavenger enzyme that catalyzes the cleavage of a residual cap structure following the degradation of mRNAs of the 3'-&gt;5' exosome-mediated mRNA decay pathway. Hydrolyzes cap analog structures like 7-methylguanosine nucleoside triphosphate (m7GpppG) and tri-methyl guanosine nucleoside triphosphate (m3(2,2,7)GpppG) with up to 2 nucleotide substrates (small capped oligoribonucleotides) and specifically releases 5'-phosphorylated RNA fragments and 7-methylguanosine monophosphate (m7GMP). Does not hydrolyze unmethylated cap analog (GpppG) and shows no decapping activity on intact m7GpppG-capped mRNA molecules. Does not hydrolyze 7-methylguanosine diphosphate (m7GDP) and tri-methylguanosine diphosphate (m3(2,2,7)GDP) to m(7)GMP and m3(2,2,7)GMP, respectively. May also play a role in the 5'-&gt;3 mRNA decay pathway; m7GDP, the downstream product released by the 5'-&gt;3' mRNA mediated decapping activity, may be also converted by dcs-1 to m7GMP. Binds to m7GpppG and strongly to m7GDP. This is m7GpppX diphosphatase (dcs-1) from Caenorhabditis elegans.